A 29-amino-acid polypeptide reads, in one-letter code: uncharacterized protein (29 aa).

A helical transmembrane segment spans residues 8 to 28 (FALIVVLFILLIIVGTAFVGG).

Belongs to the SscA family.

Its subcellular location is the membrane. This is an uncharacterized protein from Bacillus subtilis (strain 168).